Reading from the N-terminus, the 617-residue chain is Thioredoxin reductase (617 aa).

FAD is bound by residues 127-128 (PG), 147-150 (DYVK), 163-164 (TC), 168-172 (GCVPK), alanine 237, aspartate 433, and 440-442 (ELA). A disulfide bond links cysteine 164 and cysteine 169. The loop important for the interaction with TRX1 stretch occupies residues 514–528 (HRQKHIRAQKDEYDL). Histidine 585 serves as a coordination point for FAD. The Proton acceptor role is filled by histidine 585. Cysteines 611 and 616 form a disulfide.

It belongs to the class-I pyridine nucleotide-disulfide oxidoreductase family. Homodimer. FAD is required as a cofactor.

It is found in the mitochondrion. The protein resides in the cytoplasm. It catalyses the reaction [thioredoxin]-dithiol + NADP(+) = [thioredoxin]-disulfide + NADPH + H(+). In terms of biological role, catalyzes the transfer of electrons from NADPH to thioredoxins TRX1, TRX2 and TRX3, which in turn act as reductants of disulfide containing proteins. Able to reduce nitroglutathione (GSNO), a compound involved in the transport of nitric oxide (NO); however, TRX1 is more efficient in reducing GSNO. Has no catalytic activity towards oxidized glutathione (GSSG). The polypeptide is Thioredoxin reductase (Plasmodium falciparum (isolate 3D7)).